The chain runs to 250 residues: mRNA-decapping protein g5R (250 aa).

The Nudix hydrolase domain occupies 97-243 (QKFRKNWLLP…IIGPAFNFIK (147 aa)). Positions 132–153 (GKPKEDESDLTCAIREFEEETG) match the Nudix box motif. Position 138 (E138) interacts with Mg(2+). E147 functions as the Nucleophile in the catalytic mechanism. Residues E151 and D173 each coordinate Mg(2+).

The protein belongs to the Nudix hydrolase family. DIPP subfamily. In terms of assembly, interacts with host RPL23A. Requires Mg(2+) as cofactor. It depends on Mn(2+) as a cofactor.

It localises to the host rough endoplasmic reticulum. The enzyme catalyses diphospho-myo-inositol polyphosphate + H2O = myo-inositol polyphosphate + phosphate.. Decapping enzyme required for the removal of the 5'-end m7GpppN cap tethered to viral and host mRNAs to allow their decay in cells. May therefore accelerate viral and cellular mRNA turnover to eliminate competing host mRNAs and allow stage-specific synthesis of viral proteins. Acceleration of the turnover of cellular transcripts may even promote the shutoff of host protein synthesis. In addition to the mRNA cap, g5R also efficiently hydrolyzes diphosphoinositol polyphosphates. Down-regulation of the level of PP-InsP5 (diphosphoinositol pentakisphosphate) may play a role in viral manipulation of the cellular secretory pathway, a step necessary for the formation of virions. Binds viral and cellular poly(A) mRNAs, thereby decreasing both types of mRNAs. This African swine fever virus (isolate Tick/South Africa/Pretoriuskop Pr4/1996) (ASFV) protein is mRNA-decapping protein g5R.